Here is a 132-residue protein sequence, read N- to C-terminus: Peptide methionine sulfoxide reductase MsrB (132 aa).

Residues 8-130 (LDSWREELTE…NSASLKLVPR (123 aa)) form the MsrB domain. Positions 47, 50, 96, and 99 each coordinate Zn(2+). C119 (nucleophile) is an active-site residue.

Belongs to the MsrB Met sulfoxide reductase family. Zn(2+) serves as cofactor.

The catalysed reaction is L-methionyl-[protein] + [thioredoxin]-disulfide + H2O = L-methionyl-(R)-S-oxide-[protein] + [thioredoxin]-dithiol. The protein is Peptide methionine sulfoxide reductase MsrB of Pseudomonas paraeruginosa (strain DSM 24068 / PA7) (Pseudomonas aeruginosa (strain PA7)).